A 579-amino-acid chain; its full sequence is Folliculin (579 aa).

The segment at 32–82 (GAGSGDSPGQVEQAEEEEGGIQMSSRVRAHSPAEGASTDSSSPGPKKSDMC) is disordered. Ser62 and Ser73 each carry phosphoserine. Positions 86-242 (RSLAVGHPGY…RNGNAARSLT (157 aa)) constitute a uDENN FLCN/SMCR8-type domain. A coiled-coil region spans residues 287-310 (EKLADLEEESESWDNSEAEEEEKA). Acidic residues predominate over residues 294–308 (EESESWDNSEAEEEE). Residues 294–320 (EESESWDNSEAEEEEKAPATAEGAEGR) are disordered. Phosphoserine occurs at positions 302, 406, 537, 542, and 571. One can recognise a cDENN FLCN/SMCR8-type domain in the interval 339–491 (QPPKLSVFKS…ILNKMEAALT (153 aa)). In terms of domain architecture, dDENN FLCN/SMCR8-type spans 493–558 (QNLSVDVVDQ…LLKFWMTGLS (66 aa)).

It belongs to the folliculin family. Interacts (via C-terminus) with FNIP1 or FNIP2 (via C-terminus). Component of the lysosomal folliculin complex (LFC), composed of FLCN, FNIP1 (or FNIP2), RagA/RRAGA or RagB/RRAGB GDP-bound, RagC/RRAGC or RagD/RRAGD GTP-bound, and Ragulator. Interaction with FNIP1 or FNIP2 mediates indirect interaction with the PRKAA1, PRKAB1 and PRKAG1 subunits of 5'-AMP-activated protein kinase (AMPK). Interacts with HSP90AA1 in the presence of FNIP1. Interacts with HSP70, STUB1, CDC37, AHSA1, CCT2, STIP1, PTGES3 and PPP5C. Interacts with GABARAP; interaction takes place in the presence of FNIP1 and/or FNIP2. Interacts with RILP; the interaction is direct and promotes association between RILP and RAB34. Interacts with KIF3A and KIF3B. Interacts with lactate dehydrogenase LDHA, but not LDHB; the interaction is direct, may preferentially bind LDHA dimers rather than tetramers, and regulates LDHA activity, acting as an uncompetitive inhibitor. Phosphorylation by ULK1 modulates the interaction with GABARAP and is required to regulate autophagy. As to expression, expressed in kidney.

The protein localises to the lysosome membrane. It localises to the cytoplasm. It is found in the cytosol. The protein resides in the cell projection. Its subcellular location is the cilium. The protein localises to the cytoskeleton. It localises to the microtubule organizing center. It is found in the centrosome. The protein resides in the spindle. Its subcellular location is the nucleus. Its activity is regulated as follows. GTPase-activating activity is inhibited in the folliculin complex (LFC), which stabilizes the GDP-bound state of RagA/RRAGA (or RagB/RRAGB), because Arg-164 is located far from the RagC/RRAGC or RagD/RRAGD nucleotide pocket. Disassembly of the LFC complex upon amino acid restimulation liberates the GTPase-activating activity. Multi-functional protein, involved in both the cellular response to amino acid availability and in the regulation of glycolysis. GTPase-activating protein that plays a key role in the cellular response to amino acid availability through regulation of the non-canonical mTORC1 signaling cascade controlling the MiT/TFE factors TFEB and TFE3. Activates mTORC1 by acting as a GTPase-activating protein: specifically stimulates GTP hydrolysis by RagC/RRAGC or RagD/RRAGD, promoting the conversion to the GDP-bound state of RagC/RRAGC or RagD/RRAGD, and thereby activating the kinase activity of mTORC1. The GTPase-activating activity is inhibited during starvation and activated in presence of nutrients. Acts as a key component for non-canonical mTORC1-dependent control of the MiT/TFE factors TFEB and TFE3, while it is not involved in mTORC1-dependent phosphorylation of canonical RPS6KB1/S6K1 and EIF4EBP1/4E-BP1. In low-amino acid conditions, the lysosomal folliculin complex (LFC) is formed on the membrane of lysosomes, which inhibits the GTPase-activating activity of FLCN, inactivates mTORC1 and maximizes nuclear translocation of TFEB and TFE3. Upon amino acid restimulation, RagA/RRAGA (or RagB/RRAGB) nucleotide exchange promotes disassembly of the LFC complex and liberates the GTPase-activating activity of FLCN, leading to activation of mTORC1 and subsequent cytoplasmic retention of TFEB and TFE3. Indirectly acts as a positive regulator of Wnt signaling by promoting mTOR-dependent cytoplasmic retention of MiT/TFE factor TFE3. Required for the exit of hematopoietic stem cell from pluripotency by promoting mTOR-dependent cytoplasmic retention of TFE3, thereby increasing Wnt signaling. Involved in the control of embryonic stem cells differentiation; together with LAMTOR1 it is necessary to recruit and activate RagC/RRAGC and RagD/RRAGD at the lysosomes, and to induce exit of embryonic stem cells from pluripotency via non-canonical, mTOR-independent TFE3 inactivation. Acts as an inhibitor of browning of adipose tissue by regulating mTOR-dependent cytoplasmic retention of TFE3. In response to flow stress, regulates STK11/LKB1 accumulation and mTORC1 activation through primary cilia: may act by recruiting STK11/LKB1 to primary cilia for activation of AMPK resided at basal bodies, causing mTORC1 down-regulation. Together with FNIP1 and/or FNIP2, regulates autophagy: following phosphorylation by ULK1, interacts with GABARAP and promotes autophagy. Required for starvation-induced perinuclear clustering of lysosomes by promoting association of RILP with its effector RAB34. Regulates glycolysis by binding to lactate dehydrogenase LDHA, acting as an uncompetitive inhibitor. The polypeptide is Folliculin (Rattus norvegicus (Rat)).